The following is a 1223-amino-acid chain: DNA-directed RNA polymerase II subunit RPB2 (1223 aa).

Residues 1-20 (MSADNEDYYDEDPYGFEEEN) are disordered. A Mg(2+)-binding site is contributed by Asp836. The Zn(2+) site is built by Cys1162, Cys1165, Cys1181, and Cys1184. The C4-type zinc finger occupies 1162-1184 (CGICGLMSVIAKLNHNQFECKGC).

It belongs to the RNA polymerase beta chain family. As to quaternary structure, component of the RNA polymerase II (Pol II) complex consisting of 12 subunits.

Its subcellular location is the nucleus. It carries out the reaction RNA(n) + a ribonucleoside 5'-triphosphate = RNA(n+1) + diphosphate. In terms of biological role, DNA-dependent RNA polymerase catalyzes the transcription of DNA into RNA using the four ribonucleoside triphosphates as substrates. Second largest component of RNA polymerase II which synthesizes mRNA precursors and many functional non-coding RNAs. Proposed to contribute to the polymerase catalytic activity and forms the polymerase active center together with the largest subunit. Pol II is the central component of the basal RNA polymerase II transcription machinery. It is composed of mobile elements that move relative to each other. RPB2 is part of the core element with the central large cleft, the clamp element that moves to open and close the cleft and the jaws that are thought to grab the incoming DNA template. This is DNA-directed RNA polymerase II subunit RPB2 (RPB2) from Candida glabrata (strain ATCC 2001 / BCRC 20586 / JCM 3761 / NBRC 0622 / NRRL Y-65 / CBS 138) (Yeast).